A 364-amino-acid chain; its full sequence is GTPase Obg (364 aa).

The Obg domain maps to 1 to 159 (MKFIDEARIE…RNLRLELKVL (159 aa)). The disordered stretch occupies residues 128-147 (IHFKSSTNRAPRQKTDGKAG). The region spanning 160–334 (ADVGLLGMPN…LVHAIQEYLD (175 aa)) is the OBG-type G domain. Residues 166–173 (GMPNAGKS), 191–195 (FTTLH), 213–216 (DIPG), 284–287 (NKLD), and 315–317 (SAL) contribute to the GTP site. Mg(2+) contacts are provided by serine 173 and threonine 193. A disordered region spans residues 340–364 (EDAAAAAPDQRLDPTLHNVDHDDQA). Over residues 349 to 364 (QRLDPTLHNVDHDDQA) the composition is skewed to basic and acidic residues.

It belongs to the TRAFAC class OBG-HflX-like GTPase superfamily. OBG GTPase family. As to quaternary structure, monomer. Mg(2+) is required as a cofactor.

It is found in the cytoplasm. In terms of biological role, an essential GTPase which binds GTP, GDP and possibly (p)ppGpp with moderate affinity, with high nucleotide exchange rates and a fairly low GTP hydrolysis rate. Plays a role in control of the cell cycle, stress response, ribosome biogenesis and in those bacteria that undergo differentiation, in morphogenesis control. The sequence is that of GTPase Obg from Ralstonia pickettii (strain 12J).